The primary structure comprises 267 residues: RWD domain-containing protein 3 (267 aa).

An RWD domain is found at 7–114; that stretch reads QELSALAAIF…LWIQQNLRLV (108 aa). Interaction with UBE2I/UBC9 stretches follow at residues 13–15 and 100–102; these read AAI and VHE.

In terms of assembly, interacts with UBE2I/UBC9, NFKBIA, HIF1A and NCOA2.

It is found in the nucleus. Its subcellular location is the cytoplasm. Functionally, enhancer of SUMO conjugation. Via its interaction with UBE2I/UBC9, increases SUMO conjugation to proteins by promoting the binding of E1 and E2 enzymes, thioester linkage between SUMO and UBE2I/UBC9 and transfer of SUMO to specific target proteins which include HIF1A, PIAS, NFKBIA, NR3C1 and TOP1. Positively regulates the NF-kappa-B signaling pathway by enhancing the sumoylation of NF-kappa-B inhibitor alpha (NFKBIA), promoting its stabilization which consequently leads to an increased inhibition of NF-kappa-B transcriptional activity. Negatively regulates the hypoxia-inducible factor-1 alpha (HIF1A) signaling pathway by increasing the sumoylation of HIF1A, promoting its stabilization, transcriptional activity and the expression of its target gene VEGFA during hypoxia. Has no effect on ubiquitination. The sequence is that of RWD domain-containing protein 3 (Rwdd3) from Mus musculus (Mouse).